A 214-amino-acid chain; its full sequence is Cytochrome b (214 aa).

The next 4 helical transmembrane spans lie at 31 to 51, 75 to 96, 111 to 131, and 176 to 196; these read FGSM…FLAI, WIMQ…YIHI, WLSG…GYVL, and FFAL…IHIL. Residues His81 and His95 each coordinate heme b. Heme b contacts are provided by His180 and His194. Position 199 (His199) interacts with a ubiquinone.

This sequence belongs to the cytochrome b family. As to quaternary structure, the cytochrome bc1 complex contains 3 respiratory subunits (MT-CYB, CYC1 and UQCRFS1), 2 core proteins (UQCRC1 and UQCRC2) and probably 6 low-molecular weight proteins. Requires heme b as cofactor.

It localises to the mitochondrion inner membrane. Functionally, component of the ubiquinol-cytochrome c reductase complex (complex III or cytochrome b-c1 complex) that is part of the mitochondrial respiratory chain. The b-c1 complex mediates electron transfer from ubiquinol to cytochrome c. Contributes to the generation of a proton gradient across the mitochondrial membrane that is then used for ATP synthesis. The chain is Cytochrome b (MT-CYB) from Agkistrodon contortrix contortrix (Southern copperhead).